We begin with the raw amino-acid sequence, 548 residues long: Beta-caryophyllene synthase (548 aa).

Residues R268, D305, D309, R446, and D449 each contribute to the (2E,6E)-farnesyl diphosphate site. Mg(2+) is bound by residues D305 and D309. The short motif at 305–309 is the DDXXD motif element; that stretch reads DDIYD. Residues D449 and E457 each coordinate Mg(2+).

This sequence belongs to the terpene synthase family. Mg(2+) serves as cofactor.

The enzyme catalyses (2E,6E)-farnesyl diphosphate = (-)-(E)-beta-caryophyllene + diphosphate. Its pathway is secondary metabolite biosynthesis; terpenoid biosynthesis. In terms of biological role, sesquiterpene synthase that catalyzes the formation of sesquiterpenes and sesquiterpenoid alcohols. Converts farnesyl diphosphate (FPP) to beta-caryophyllene. Can use geranyl diphosphate (GPP) to produce myrcene, limonene and camphene. The sequence is that of Beta-caryophyllene synthase from Lavandula angustifolia (Lavender).